Reading from the N-terminus, the 54-residue chain is Ovomucoid (54 aa).

In terms of domain architecture, Kazal-like spans 4-54; sequence VDCSDYPRPVCTLDYMPLCGSDNKTYSNKCNFCNAVVDSNGTITLSHFGRC. 3 cysteine pairs are disulfide-bonded: Cys-6/Cys-36, Cys-14/Cys-33, and Cys-22/Cys-54. An N-linked (GlcNAc...) asparagine glycan is attached at Asn-43.

The protein localises to the secreted. The protein is Ovomucoid of Corvus albus (Pied crow).